The chain runs to 571 residues: uncharacterized protein (571 aa).

5 helical membrane passes run 10 to 29 (VRLH…HFIG), 36 to 55 (VSLG…GLLF), 65 to 87 (WAFF…FASL), 96 to 118 (ALAV…LFRF), and 166 to 188 (ATTY…PRLL). The region spanning 294-378 (TEVDDQELLS…IATAARNLGF (85 aa)) is the RCK C-terminal domain. A run of 6 helical transmembrane segments spans residues 388–406 (LVYL…LLQV), 411–433 (VPLG…WLYS), 446–465 (LRLL…GLAA), 480–502 (LFAK…GLLL), 509–531 (LPPV…LNAL), and 546–568 (VPFA…CAVA).

It belongs to the AAE transporter (TC 2.A.81) family.

It is found in the cell membrane. This is an uncharacterized protein from Bordetella parapertussis (strain 12822 / ATCC BAA-587 / NCTC 13253).